A 1349-amino-acid chain; its full sequence is Elongator complex protein 1 (1349 aa).

Ser-529, Ser-539, Ser-551, Ser-636, and Ser-828 each carry phosphoserine. Residues 919-1349 are mediates dimerization; that stretch reads QDVNVVYKSA…DFPKSHIVDF (431 aa). Residues Ser-1198 and Ser-1202 each carry the phosphoserine; by HRR25 modification. 2 positions are modified to phosphoserine: Ser-1205 and Ser-1209. A compositionally biased stretch (low complexity) spans 1214 to 1228; it reads YTGKTGGTAKTGASR. The interval 1214–1245 is disordered; sequence YTGKTGGTAKTGASRRTAKNKRREERKRARGK. The tract at residues 1228 to 1246 is required for binding to tRNA; sequence RRTAKNKRREERKRARGKK.

This sequence belongs to the ELP1/IKA1 family. Homodimer; dimerization promotes ELP1/IKI3 stability and elongator complex formation. Component of the elongator complex which consists of ELP1/IKI3, ELP2, ELP3, ELP4, ELP5/IKI1 and ELP6. The elongator complex is composed of two copies of the Elp123 subcomplex (composed of ELP1/IKI3, ELP2 and ELP3) and two copies of the Elp456 subcomplex (composed of ELP4, ELP5/IKI1 and ELP6). The Elp123 subcomplex forms a two-lobed scaffold, which binds the Elp456 subcomplex asymmetrically. In the complex, ELP1/IKI3 interacts with ELP2. In each lobe, ELP2 is tightly sandwiched between ELP1/IKI3 and ELP3. The Elp123 subcomplex binds tRNA through ELP1/IKI3 and ELP3 and can bind 2 tRNAs simultaneously. tRNA-binding induces conformational rearrangements which precisely position the targeted anticodon base in the active site. The Elp456 subcomplex binds tRNA and has ATPase activity. ELP1/IKI3 interacts with HRR25 and KTI12. Interacts with KTI11/DPH3. Phosphorylation promotes the tRNA modification function of the elongator complex.

It is found in the cytoplasm. Its subcellular location is the nucleus. The protein operates within tRNA modification; 5-methoxycarbonylmethyl-2-thiouridine-tRNA biosynthesis. In terms of biological role, component of the elongator complex which is required for multiple tRNA modifications, including mcm5U (5-methoxycarbonylmethyl uridine), mcm5s2U (5-methoxycarbonylmethyl-2-thiouridine), and ncm5U (5-carbamoylmethyl uridine). The elongator complex catalyzes formation of carboxymethyluridine in the wobble base at position 34 in tRNAs. Functions as a gamma-toxin target (TOT); disruption of the complex confers resistance to Kluyveromyces lactis toxin zymocin (pGKL1 killer toxin). May also be involved in sensitivity to Pichia inositovora toxin. ELP1/IKI3 binds to tRNA, mediating interaction of the elongator complex with tRNA. Independently, may be involved in polarized exocytosis. This chain is Elongator complex protein 1 (IKI3), found in Saccharomyces cerevisiae (strain ATCC 204508 / S288c) (Baker's yeast).